Consider the following 523-residue polypeptide: NAD(P)H-quinone oxidoreductase subunit 2 (523 aa).

13 helical membrane-spanning segments follow: residues 29–49 (AVLP…VDLA), 57–77 (WVPP…ALQW), 94–114 (LAVA…LISW), 132–152 (LAAT…SIFI), 182–202 (LLVG…LYGL), 221–241 (PIAA…IAAV), 255–275 (PTPV…ALAL), 291–311 (LLFT…ALAQ), 317–337 (MLAY…VCGT), 345–365 (VLYM…IILF), 389–409 (LGLS…GFFG), 424–444 (LLVV…ISVI), and 477–497 (VALI…NPLF).

It belongs to the complex I subunit 2 family. As to quaternary structure, NDH-1 can be composed of about 15 different subunits; different subcomplexes with different compositions have been identified which probably have different functions.

It localises to the cellular thylakoid membrane. It catalyses the reaction a plastoquinone + NADH + (n+1) H(+)(in) = a plastoquinol + NAD(+) + n H(+)(out). The enzyme catalyses a plastoquinone + NADPH + (n+1) H(+)(in) = a plastoquinol + NADP(+) + n H(+)(out). Functionally, NDH-1 shuttles electrons from an unknown electron donor, via FMN and iron-sulfur (Fe-S) centers, to quinones in the respiratory and/or the photosynthetic chain. The immediate electron acceptor for the enzyme in this species is believed to be plastoquinone. Couples the redox reaction to proton translocation, and thus conserves the redox energy in a proton gradient. Cyanobacterial NDH-1 also plays a role in inorganic carbon-concentration. The chain is NAD(P)H-quinone oxidoreductase subunit 2 from Synechococcus sp. (strain CC9902).